Consider the following 368-residue polypeptide: DNA replication and repair protein RecF (368 aa).

30 to 37 (GNNAQGKT) provides a ligand contact to ATP.

It belongs to the RecF family.

It is found in the cytoplasm. Its function is as follows. The RecF protein is involved in DNA metabolism; it is required for DNA replication and normal SOS inducibility. RecF binds preferentially to single-stranded, linear DNA. It also seems to bind ATP. The protein is DNA replication and repair protein RecF of Streptococcus pyogenes serotype M49 (strain NZ131).